The following is a 504-amino-acid chain: Endosomal/lysosomal proton channel TMEM175 (504 aa).

The disordered stretch occupies residues 1–27 (MSQPRTPEQALDTPGDCPPGRRDEDAG). The Cytoplasmic portion of the chain corresponds to 1–33 (MSQPRTPEQALDTPGDCPPGRRDEDAGEGIQCS). Thr-6 is subject to Phosphothreonine. Residues 34-56 (QRMLSFSDALLSIIATVMILPVT) traverse the membrane as a helical segment. The short motif at 35–41 (RMLSFSD) is the RxxxFSD motif 1 element. At 57–77 (HTEISPEQQFDRSVQRLLATR) the chain is on the lumenal side. The segment at 58 to 63 (TEISPE) is short helix H1-1. The segment at 65 to 71 (QFDRSVQ) is short helix H2-1. A helical membrane pass occupies residues 78–100 (IAVYLMTFLIVTVAWAAHTRLFQ). Residues 101-106 (VVGKTD) are Cytoplasmic-facing. Residues 107-128 (DTLALLNLACMMTITFLPYTFS) traverse the membrane as a helical segment. Over 129–138 (LMVTFPDVPL) the chain is Lumenal. The helical transmembrane segment at 139–160 (GIFLFCVCVIAIGVVQALIVGY) threads the bilayer. The Cytoplasmic portion of the chain corresponds to 161–184 (AFHFPHLLSPQIQRSAHRALYRRH). Residues 185 to 205 (VLGIVLQGPALCFAAAIFSLF) form a helical membrane-spanning segment. Over 206–210 (FVPLS) the chain is Lumenal. Residues 211–230 (YLLMVTVILLPYVSKVTGWC) traverse the membrane as a helical segment. The Cytoplasmic portion of the chain corresponds to 231–257 (RDRLLGHREPSAHPVEVFSFDLHEPLS). A helical transmembrane segment spans residues 258–282 (KERVEAFSDGVYAIVATLLILDICE). The RxxxFSD motif 2 signature appears at 260–266 (RVEAFSD). Topologically, residues 283 to 309 (DNVPDPKDVKERFSGSLVAALSATGPR) are lumenal. Residues 288–296 (PKDVKERFS) are short helix H1-2. The short helix H2-2 stretch occupies residues 298-304 (SLVAALS). The helical transmembrane segment at 310–332 (FLAYFGSFATVGLLWFAHHSLFL) threads the bilayer. Residues 333–338 (HVRKAT) lie on the Cytoplasmic side of the membrane. The helical transmembrane segment at 339–360 (RAMGLLNTLSLAFVGGLPLAYQ) threads the bilayer. The Lumenal segment spans residues 361 to 375 (QTSAFARQPRDELER). The helical transmembrane segment at 376–396 (VRVSCTIIFLASIFQLAMWTT) threads the bilayer. Over 397–416 (ALLHQAETLQPSVWFGGREH) the chain is Cytoplasmic. Residues 417-440 (VLMFAKLALYPCASLLAFASTCLL) form a helical membrane-spanning segment. At 441–442 (SR) the chain is on the lumenal side. A helical membrane pass occupies residues 443 to 469 (FSVGIFHLMQIAVPCAFLLLRLLVGLA). The Cytoplasmic segment spans residues 470-504 (LATLRVLRGLARPEHPPPAPTGQDDPQSQLLPAPC). The disordered stretch occupies residues 483 to 504 (EHPPPAPTGQDDPQSQLLPAPC). The segment covering 493–504 (DDPQSQLLPAPC) has biased composition (polar residues).

Belongs to the TMEM175 family. As to quaternary structure, homodimer. Interacts with AKT (AKT1, AKT2 or AKT3); leading to formation of the lysoK(GF) complex, which activates the channel. Interacts with LAMP1; inhibiting the proton channel activity of TMEM175. Interacts with LAMP2; inhibiting the proton channel activity of TMEM175. In terms of tissue distribution, widely expressed.

It is found in the endosome membrane. The protein localises to the lysosome membrane. It carries out the reaction H(+)(in) = H(+)(out). It catalyses the reaction K(+)(in) = K(+)(out). Active at low pH (under pH 4.6): proton channel activity is activated by luminal side protons. Polyunsaturated fatty acids, such as arachidonic acid, also activate the channel activity. Proton channel activity is directly inhibited by LAMP1 or LAMP2, facilitating lysosomal acidification. Channel activity is activated following interaction with AKT (AKT1, AKT2 or AKT3): interaction promotes activation from closed to an open state. Activation by AKT is independent of AKT serine/threonine-protein kinase activity. Proton-activated proton channel that catalyzes proton efflux from endosomes and lysosomes to maintain a steady-state pH. Activated at low pH (under pH 4.6) by luminal side protons: selectively mediates lysosomal proton release from lysosomes, eliciting a proton leak that balances V-ATPase activity to maintain pH homeostasis. Regulation of lumenal pH stability is required for autophagosome-lysosome fusion. Also acts as a potassium channel at higher pH, regulating potassium conductance in endosomes and lysosomes. Constitutes the pore-forming subunit of the lysoK(GF) complex, a complex activated by extracellular growth factors. The lysoK(GF) complex is composed of TMEM175 and AKT (AKT1, AKT2 or AKT3), a major target of growth factor receptors: in the complex, TMEM175 channel is opened by conformational changes by AKT, leading to its activation. The lysoK(GF) complex is required to protect neurons against stress-induced damage. This Homo sapiens (Human) protein is Endosomal/lysosomal proton channel TMEM175.